We begin with the raw amino-acid sequence, 639 residues long: DNA mismatch repair protein MutL (639 aa).

The segment at 336–392 is disordered; that stretch reads SAHDDPTPAISGAARDEEPRGVENRASAGENRFNRPASSPVASAPRPAHVAAPRMPA. Over residues 349-358 the composition is skewed to basic and acidic residues; it reads ARDEEPRGVE. Over residues 370-392 the composition is skewed to low complexity; sequence RPASSPVASAPRPAHVAAPRMPA.

Belongs to the DNA mismatch repair MutL/HexB family.

In terms of biological role, this protein is involved in the repair of mismatches in DNA. It is required for dam-dependent methyl-directed DNA mismatch repair. May act as a 'molecular matchmaker', a protein that promotes the formation of a stable complex between two or more DNA-binding proteins in an ATP-dependent manner without itself being part of a final effector complex. The chain is DNA mismatch repair protein MutL from Edwardsiella ictaluri (strain 93-146).